A 185-amino-acid polypeptide reads, in one-letter code: Shikimate kinase (185 aa).

ATP is bound at residue 12-17 (GSGKTT). Residue T16 coordinates Mg(2+). The substrate site is built by D34, R58, and G79. Position 116 (R116) interacts with ATP. R135 contributes to the substrate binding site.

Belongs to the shikimate kinase family. As to quaternary structure, monomer. Requires Mg(2+) as cofactor.

Its subcellular location is the cytoplasm. It carries out the reaction shikimate + ATP = 3-phosphoshikimate + ADP + H(+). Its pathway is metabolic intermediate biosynthesis; chorismate biosynthesis; chorismate from D-erythrose 4-phosphate and phosphoenolpyruvate: step 5/7. Functionally, catalyzes the specific phosphorylation of the 3-hydroxyl group of shikimic acid using ATP as a cosubstrate. The sequence is that of Shikimate kinase from Corynebacterium jeikeium (strain K411).